The sequence spans 286 residues: Urease accessory protein UreD (286 aa).

It belongs to the UreD family. UreD, UreF and UreG form a complex that acts as a GTP-hydrolysis-dependent molecular chaperone, activating the urease apoprotein by helping to assemble the nickel containing metallocenter of UreC. The UreE protein probably delivers the nickel.

The protein resides in the cytoplasm. Required for maturation of urease via the functional incorporation of the urease nickel metallocenter. The chain is Urease accessory protein UreD from Rhodopseudomonas palustris (strain BisA53).